The sequence spans 424 residues: Serine--tRNA ligase (424 aa).

L-serine is bound at residue Thr-229 to Glu-231. ATP is bound by residues Arg-260–Glu-262 and Val-276. Position 283 (Glu-283) interacts with L-serine. Glu-347–Ser-350 is an ATP binding site. Thr-383 serves as a coordination point for L-serine.

It belongs to the class-II aminoacyl-tRNA synthetase family. Type-1 seryl-tRNA synthetase subfamily. As to quaternary structure, homodimer. The tRNA molecule binds across the dimer.

The protein localises to the cytoplasm. The catalysed reaction is tRNA(Ser) + L-serine + ATP = L-seryl-tRNA(Ser) + AMP + diphosphate + H(+). It catalyses the reaction tRNA(Sec) + L-serine + ATP = L-seryl-tRNA(Sec) + AMP + diphosphate + H(+). The protein operates within aminoacyl-tRNA biosynthesis; selenocysteinyl-tRNA(Sec) biosynthesis; L-seryl-tRNA(Sec) from L-serine and tRNA(Sec): step 1/1. Functionally, catalyzes the attachment of serine to tRNA(Ser). Is also able to aminoacylate tRNA(Sec) with serine, to form the misacylated tRNA L-seryl-tRNA(Sec), which will be further converted into selenocysteinyl-tRNA(Sec). The chain is Serine--tRNA ligase from Methanosphaera stadtmanae (strain ATCC 43021 / DSM 3091 / JCM 11832 / MCB-3).